The chain runs to 72 residues: Translation initiation factor IF-1 (72 aa).

Residues 1–72 (MAKDDVIEID…DKGRITYRYK (72 aa)) form the S1-like domain.

This sequence belongs to the IF-1 family. In terms of assembly, component of the 30S ribosomal translation pre-initiation complex which assembles on the 30S ribosome in the order IF-2 and IF-3, IF-1 and N-formylmethionyl-tRNA(fMet); mRNA recruitment can occur at any time during PIC assembly.

The protein localises to the cytoplasm. Functionally, one of the essential components for the initiation of protein synthesis. Stabilizes the binding of IF-2 and IF-3 on the 30S subunit to which N-formylmethionyl-tRNA(fMet) subsequently binds. Helps modulate mRNA selection, yielding the 30S pre-initiation complex (PIC). Upon addition of the 50S ribosomal subunit IF-1, IF-2 and IF-3 are released leaving the mature 70S translation initiation complex. In Campylobacter curvus (strain 525.92), this protein is Translation initiation factor IF-1.